A 186-amino-acid polypeptide reads, in one-letter code: ADP-ribosylation factor-like protein alp41 (186 aa).

Residue Gly-2 is the site of N-myristoyl glycine attachment. GTP contacts are provided by residues Gly-23–Thr-30, Asp-66–Gln-70, and Asn-125–Asp-128.

It belongs to the small GTPase superfamily. Arf family.

The protein localises to the cytoplasm. The protein resides in the cytoskeleton. In terms of biological role, has a role in the cofactor-dependent pathway of microtubule biogenesis. Required for growth polarity control. The polypeptide is ADP-ribosylation factor-like protein alp41 (alp41) (Schizosaccharomyces pombe (strain 972 / ATCC 24843) (Fission yeast)).